Reading from the N-terminus, the 113-residue chain is uncharacterized protein (113 aa).

The protein localises to the mitochondrion. This is an uncharacterized protein from Paramecium tetraurelia.